The sequence spans 807 residues: FAD-linked oxidoreductase pytB (807 aa).

Positions 1 to 18 (MRFLGIAAVATFSTVVSA) are cleaved as a signal peptide. 8 N-linked (GlcNAc...) asparagine glycosylation sites follow: Asn45, Asn106, Asn120, Asn242, Asn295, Asn351, Asn419, and Asn699. The region spanning 60-231 (FDELPVLLAY…VEFTLSLTSI (172 aa)) is the FAD-binding PCMH-type domain.

It belongs to the oxygen-dependent FAD-linked oxidoreductase family. Requires FAD as cofactor.

It functions in the pathway secondary metabolite biosynthesis. Its function is as follows. FAD-linked oxidoreductase; part of the gene cluster that mediates the biosynthesis of pyranterreones, a family of antioxidative compounds. The first step of pyranonigrins biosynthesis is performed by the hybrid PKS-NRPS synthetase pytA that condenses 4 malonyl-CoA units ato the acetyl starter unit by the modular PKS of pytA. The acyl chain is then connected to an L-serine through the amide bond by the modular NRPS of pytA. A tetramic acid is formed and released from the PKS-NRPS pytA to give pyranterreone 5 with the help of the thioesterase pytI. Pyranterreone 5 could be methylated by pytC to afford pyranterreone 6. Both pyranterreones 5 and 6 are subsequently oxidized by the FAD-linked oxidoreductase pytB and the cytochrome P450 monooxygenase pytD to form the fused gamma-pyrone core, resulting in pyranterreones 7 and 11, respectively. The hydroxy group at C-8 of pyranterreones 7 and 11 are dehydrated by the aspartyl protease pytH to form a delta-7 double bond to give pyranterreones 3 and 1, 2 accordingly. The exo-methylene of pyranterreone 3 could be reduced into a pendant methyl by reductase pytE to provide pyranterreone 4, also known as cordylactam. Pyranterreone 4 can be reconverted to pyranterreone 3 through pytB-catalyzed dehydrogenation or further oxidized to pyranterreones 9 and 10. The polypeptide is FAD-linked oxidoreductase pytB (Aspergillus terreus (strain NIH 2624 / FGSC A1156)).